Consider the following 118-residue polypeptide: Large ribosomal subunit protein bL19 (118 aa).

It belongs to the bacterial ribosomal protein bL19 family.

Its function is as follows. This protein is located at the 30S-50S ribosomal subunit interface and may play a role in the structure and function of the aminoacyl-tRNA binding site. This is Large ribosomal subunit protein bL19 from Salinibacter ruber (strain DSM 13855 / M31).